The following is a 176-amino-acid chain: Nicotinamide-nucleotide adenylyltransferase (176 aa).

It belongs to the archaeal NMN adenylyltransferase family.

The protein localises to the cytoplasm. The catalysed reaction is beta-nicotinamide D-ribonucleotide + ATP + H(+) = diphosphate + NAD(+). The protein operates within cofactor biosynthesis; NAD(+) biosynthesis; NAD(+) from nicotinamide D-ribonucleotide: step 1/1. The polypeptide is Nicotinamide-nucleotide adenylyltransferase (Halorubrum lacusprofundi (strain ATCC 49239 / DSM 5036 / JCM 8891 / ACAM 34)).